The primary structure comprises 188 residues: Elongation factor P (188 aa).

It belongs to the elongation factor P family.

The protein localises to the cytoplasm. It functions in the pathway protein biosynthesis; polypeptide chain elongation. In terms of biological role, involved in peptide bond synthesis. Stimulates efficient translation and peptide-bond synthesis on native or reconstituted 70S ribosomes in vitro. Probably functions indirectly by altering the affinity of the ribosome for aminoacyl-tRNA, thus increasing their reactivity as acceptors for peptidyl transferase. This chain is Elongation factor P, found in Streptomyces avermitilis (strain ATCC 31267 / DSM 46492 / JCM 5070 / NBRC 14893 / NCIMB 12804 / NRRL 8165 / MA-4680).